The sequence spans 690 residues: Protein O-mannosyl-transferase F38B6.6 (690 aa).

The disordered stretch occupies residues 1–24 (MKKHLHHKVSGSCDPGDRSPKEKG). Over 1–32 (MKKHLHHKVSGSCDPGDRSPKEKGRSQGIRNL) the chain is Cytoplasmic. The segment covering 15–24 (PGDRSPKEKG) has biased composition (basic and acidic residues). The helical transmembrane segment at 33–53 (LILISLSIIPYLSCLGGDFVF) threads the bilayer. Residues 54–110 (DDAESIVNNPIVNGKDPLLQIFSRDFWGRSISSSNSHKSYRPVTTFTFWLNYKLHET) are Extracellular-facing. Residues 111 to 131 (STLGYHVVNIICHTVATLVFY) form a helical membrane-spanning segment. Residues 132–138 (KLGKQLE) are Cytoplasmic-facing. Residues 139–159 (HIFDFFNIAFSASILFAVHPV) form a helical membrane-spanning segment. Residues 160 to 166 (HTEAVAN) are Extracellular-facing. The N-linked (GlcNAc...) asparagine glycan is linked to asparagine 166. The chain crosses the membrane as a helical span at residues 167 to 187 (ITGRAELLMTIFSLAALILHV). Residues 188-234 (KNREINCKFVLLVILSTLSKEQGLMTIPIAICIDFLAHRSCRSNFVR) are Cytoplasmic-facing. Residues 235–255 (MICLLVAIGFLRMMVNGFEAA) form a helical membrane-spanning segment. Residues 256–273 (KFTKLDNPTAFLNSKFYR) are Extracellular-facing. A helical membrane pass occupies residues 274–294 (MINYTYIWLYHAYLLVIPVNL). Topologically, residues 295–307 (CFDYSMGCISSIT) are cytoplasmic. A helical transmembrane segment spans residues 308–328 (TMWDLRALSPVLIFTIVIIGV). The Extracellular portion of the chain corresponds to 329–341 (KFQNECRAFTLSS). A helical membrane pass occupies residues 342-362 (LMGIISFLPASNIFFTVGFSI). Topologically, residues 363 to 365 (AER) are cytoplasmic. A helical membrane pass occupies residues 366–386 (VLYLPSAGFCLLCAIIFKKLS). Over 387–690 (VHFKNADVLS…EHNCYNSTLP (304 aa)) the chain is Extracellular. 5 TPR repeats span residues 398-431 (TLIL…CPTN), 432-465 (AKIH…DPSY), 466-499 (EQAL…RPSF), 500-533 (AVAW…RPNS), and 534-567 (AHCL…DPSH). 3 N-linked (GlcNAc...) asparagine glycosylation sites follow: asparagine 559, asparagine 600, and asparagine 617. TPR repeat units lie at residues 602 to 635 (SRVH…NPTS) and 636 to 669 (VLFH…DSKN). Residue asparagine 686 is glycosylated (N-linked (GlcNAc...) asparagine).

It belongs to the TMTC family.

It is found in the membrane. The protein localises to the endoplasmic reticulum. The catalysed reaction is a di-trans,poly-cis-dolichyl beta-D-mannosyl phosphate + L-seryl-[protein] = 3-O-(alpha-D-mannosyl)-L-seryl-[protein] + a di-trans,poly-cis-dolichyl phosphate + H(+). The enzyme catalyses a di-trans,poly-cis-dolichyl beta-D-mannosyl phosphate + L-threonyl-[protein] = 3-O-(alpha-D-mannosyl)-L-threonyl-[protein] + a di-trans,poly-cis-dolichyl phosphate + H(+). Its pathway is protein modification; protein glycosylation. Transfers mannosyl residues to the hydroxyl group of serine or threonine residues. This chain is Protein O-mannosyl-transferase F38B6.6, found in Caenorhabditis elegans.